The sequence spans 399 residues: Probable aspartate/prephenate aminotransferase (399 aa).

3 residues coordinate L-aspartate: Gly39, Trp125, and Asn175. Position 239 is an N6-(pyridoxal phosphate)lysine (Lys239). Arg375 is an L-aspartate binding site.

Belongs to the class-I pyridoxal-phosphate-dependent aminotransferase family. Homodimer. It depends on pyridoxal 5'-phosphate as a cofactor.

Its subcellular location is the cytoplasm. The enzyme catalyses L-aspartate + 2-oxoglutarate = oxaloacetate + L-glutamate. The catalysed reaction is L-arogenate + 2-oxoglutarate = prephenate + L-glutamate. Functionally, catalyzes the reversible conversion of aspartate and 2-oxoglutarate to glutamate and oxaloacetate. Can also transaminate prephenate in the presence of glutamate. This is Probable aspartate/prephenate aminotransferase (aatA) from Rickettsia prowazekii (strain Madrid E).